The sequence spans 329 residues: DNA-directed RNA polymerase subunit alpha (329 aa).

Positions 1 to 235 (MQGSVTEFLK…EQLDAFVDLR (235 aa)) are alpha N-terminal domain (alpha-NTD). An alpha C-terminal domain (alpha-CTD) region spans residues 249 to 329 (FDPILLRPVD…NWPPASIAED (81 aa)).

This sequence belongs to the RNA polymerase alpha chain family. Homodimer. The RNAP catalytic core consists of 2 alpha, 1 beta, 1 beta' and 1 omega subunit. When a sigma factor is associated with the core the holoenzyme is formed, which can initiate transcription.

It catalyses the reaction RNA(n) + a ribonucleoside 5'-triphosphate = RNA(n+1) + diphosphate. Its function is as follows. DNA-dependent RNA polymerase catalyzes the transcription of DNA into RNA using the four ribonucleoside triphosphates as substrates. The polypeptide is DNA-directed RNA polymerase subunit alpha (Histophilus somni (strain 129Pt) (Haemophilus somnus)).